The sequence spans 464 residues: ATP synthase subunit beta (464 aa).

153–160 (GGAGVGKT) contacts ATP.

The protein belongs to the ATPase alpha/beta chains family. As to quaternary structure, F-type ATPases have 2 components, CF(1) - the catalytic core - and CF(0) - the membrane proton channel. CF(1) has five subunits: alpha(3), beta(3), gamma(1), delta(1), epsilon(1). CF(0) has three main subunits: a(1), b(2) and c(9-12). The alpha and beta chains form an alternating ring which encloses part of the gamma chain. CF(1) is attached to CF(0) by a central stalk formed by the gamma and epsilon chains, while a peripheral stalk is formed by the delta and b chains.

The protein resides in the cell inner membrane. It carries out the reaction ATP + H2O + 4 H(+)(in) = ADP + phosphate + 5 H(+)(out). In terms of biological role, produces ATP from ADP in the presence of a proton gradient across the membrane. The catalytic sites are hosted primarily by the beta subunits. The polypeptide is ATP synthase subunit beta (Burkholderia ambifaria (strain ATCC BAA-244 / DSM 16087 / CCUG 44356 / LMG 19182 / AMMD) (Burkholderia cepacia (strain AMMD))).